The primary structure comprises 538 residues: MDVRICLLLFLISNPSSCIQETYNEESCSTVTRGYKSVLRTGWYTNVFNLEIGNVENITCNDGPSLIDTELVLTKNALRELKTVSADQVAKESRLSSPRRRRFVLGAIALGVATAAAVTAGVALAKTIRLEGEVKAIKNALRNTNEAVSTLGNGVRVLATAVNDLKEFISKKLTPAINQNKCNIADIKMAISFGQNNRRFLNVVRQFSDSAGITSAVSLDLMTDDELVRAINRMPTSSGQISLMLNNRAMVRRKGFGILIGVYDGTVVYMVQLPIFGVIETPCWRVVAAPLCRKEKGNYACILREDQGWYCTNAGSTAYYPNKDDCEVRDDYVFCDTAAGINVALEVEQCNYNISTSKYPCKVSTGRHPVSMVALTPLGGLVSCYESVSCSIGSNKVGIIKQLGKGCTHIPNNEADTITIDNTVYQLSKVVGEQRTIKGAPVVNNFNPILFPEDQFNVALDQVFESIDRSQDLIDKSNDLLGADAKSKAGIAIAIVVLVILGIFFLLAVIYYCSRVRKTKPKHDYPATTGHSSMAYVS.

An N-terminal signal peptide occupies residues 1–18 (MDVRICLLLFLISNPSSC). Topologically, residues 19–489 (IQETYNEESC…LLGADAKSKA (471 aa)) are extracellular. Intrachain disulfides connect Cys28/Cys407, Cys60/Cys182, Cys283/Cys311, Cys292/Cys301, Cys326/Cys335, Cys350/Cys361, and Cys384/Cys390. Asn57 carries N-linked (GlcNAc...) asparagine; by host glycosylation. 2 fusion peptide regions span residues 103-124 (FVLGAIALGVATAAAVTAGVAL) and 103-127 (FVLGAIALGVATAAAVTAGVALAKT). Residues 125-153 (AKTIRLEGEVKAIKNALRNTNEAVSTLGN) are a coiled coil. Asn353 is a glycosylation site (N-linked (GlcNAc...) asparagine; by host). A coiled-coil region spans residues 459-484 (ALDQVFESIDRSQDLIDKSNDLLGAD). A helical transmembrane segment spans residues 490 to 510 (GIAIAIVVLVILGIFFLLAVI). The Cytoplasmic portion of the chain corresponds to 511 to 538 (YYCSRVRKTKPKHDYPATTGHSSMAYVS). Cys513 carries the S-palmitoyl cysteine; by host lipid modification.

The protein belongs to the paramyxoviruses fusion glycoprotein family. In terms of assembly, homotrimer. Heterodimer with fusion protein F2; disulfide-linked. As a heterodimer with F2, interacts with host heparan sulfate. Part of a complex composed of F1, F2 and G glycoproteins. As to quaternary structure, homotrimer. Heterodimer with fusion protein F1; disulfide-linked. As a heterodimer with F1, interacts with host heparan sulfate. Part of a complex composed of F1, F2 and G glycoproteins. Post-translationally, the F glycoprotein is synthesized as a F0 inactive precursor that is heavily N-glycosylated and processed.

The protein localises to the host Golgi apparatus membrane. It is found in the virion membrane. The protein resides in the host cell membrane. Functionally, inactive precursor that is cleaved to give rise to the mature F1 and F2 fusion glycoproteins. Its function is as follows. Class I viral fusion protein. Under the current model, the protein has at least 3 conformational states: pre-fusion native state, pre-hairpin intermediate state, and post-fusion hairpin state. During viral and plasma cell membrane fusion, the coiled coil regions assume a trimer-of-hairpins structure, positioning the fusion peptide in close proximity to the C-terminal region of the ectodomain. The formation of this structure appears to drive apposition and subsequent fusion of viral and cellular membranes leading to delivery of the nucleocapsid into the cytoplasm. This fusion is pH independent and occurs at the plasma or endosomal membrane. The trimer of F1-F2 (F protein) also facilitates the attachment to host cell by binding to host heparan sulfate. Major determinant of the species specificity of RSV infection. The trimer of F1-F2 (F protein) also facilitates the attachment to host cell by binding to host heparan sulfate. In Meleagris gallopavo (Wild turkey), this protein is Fusion glycoprotein F0 (F).